We begin with the raw amino-acid sequence, 986 residues long: P3N-PIPO polyprotein (986 aa).

Residues K141 to F284 form the Peptidase S30 domain. Catalysis depends on for P1 proteinase activity residues H192, D201, and S235. The short motif at K334–C337 is the Involved in interaction with stylet and aphid transmission element. The Involved in virions binding and aphid transmission motif lies at P592–K594. A Peptidase C6 domain is found at L618–G740. Catalysis depends on for helper component proteinase activity residues C626 and H699.

Belongs to the potyviridae P3N-PIPO polyprotein family. Interacts (via PIPO domain) with host PCaP1 protein; this interaction may help to anchor the movement complex to the plasma membrane from which the complex could move to the plasmodesmata. In terms of processing, potyviral RNA is expressed as two polyproteins which undergo post-translational proteolytic processing. Genome polyprotein is processed by NIa-pro, P1 and HC-pro proteinases resulting in the production of at least ten individual proteins. P3N-PIPO is cleaved by P1 and HC-pro proteinases resulting in the production of three individual proteins. The P1 proteinase and the HC-pro cleave only their respective C-termini autocatalytically.

The protein localises to the host cell junction. It is found in the host plasmodesma. The catalysed reaction is Hydrolyzes a Gly-|-Gly bond at its own C-terminus, commonly in the sequence -Tyr-Xaa-Val-Gly-|-Gly, in the processing of the potyviral polyprotein.. Its function is as follows. Required for aphid transmission and also has proteolytic activity. Only cleaves a Gly-Gly dipeptide at its own C-terminus. Interacts with virions and aphid stylets. Acts as a suppressor of RNA-mediated gene silencing, also known as post-transcriptional gene silencing (PTGS), a mechanism of plant viral defense that limits the accumulation of viral RNAs. May have RNA-binding activity. In terms of biological role, allows efficient cell to cell propagation, by bypassing the host cell wall barrier. Transports viral genome to neighboring plant cells directly through plasmosdesmata, without any budding. This is P3N-PIPO polyprotein from Capsicum (peppers).